The primary structure comprises 206 residues: Small ribosomal subunit protein uS4 (206 aa).

Residues 96-156 enclose the S4 RNA-binding domain; the sequence is GRLDNVVYRM…EKAKKQARIK (61 aa).

It belongs to the universal ribosomal protein uS4 family. In terms of assembly, part of the 30S ribosomal subunit. Contacts protein S5. The interaction surface between S4 and S5 is involved in control of translational fidelity.

One of the primary rRNA binding proteins, it binds directly to 16S rRNA where it nucleates assembly of the body of the 30S subunit. Its function is as follows. With S5 and S12 plays an important role in translational accuracy. This is Small ribosomal subunit protein uS4 from Tolumonas auensis (strain DSM 9187 / NBRC 110442 / TA 4).